Consider the following 350-residue polypeptide: Solute carrier family 35 member E4 (350 aa).

Helical transmembrane passes span valine 40–glycine 60, proline 79–glutamine 99, valine 110–threonine 130, leucine 135–leucine 155, valine 218–valine 238, valine 258–leucine 278, threonine 279–serine 299, and leucine 301–glycine 321. The EamA domain occupies asparagine 125–alanine 179.

The protein belongs to the TPT transporter family. SLC35E subfamily.

The protein localises to the membrane. In terms of biological role, putative transporter. In Rattus norvegicus (Rat), this protein is Solute carrier family 35 member E4 (Slc35e4).